Consider the following 333-residue polypeptide: Holliday junction branch migration complex subunit RuvB (333 aa).

The tract at residues 1-181 (MNDILNKEPM…FGISSHMEYY (181 aa)) is large ATPase domain (RuvB-L). ATP-binding positions include leucine 20, arginine 21, glycine 62, lysine 65, threonine 66, threonine 67, 128-130 (EDF), arginine 171, tyrosine 181, and arginine 218. Threonine 66 contributes to the Mg(2+) binding site. Residues 182–252 (QERDLEEIVK…ITDKALSILD (71 aa)) are small ATPAse domain (RuvB-S). The head domain (RuvB-H) stretch occupies residues 255 to 333 (AAGLDYIDQK…HLGYVYNEED (79 aa)). Residues arginine 291, arginine 310, and arginine 315 each contribute to the DNA site.

Belongs to the RuvB family. In terms of assembly, homohexamer. Forms an RuvA(8)-RuvB(12)-Holliday junction (HJ) complex. HJ DNA is sandwiched between 2 RuvA tetramers; dsDNA enters through RuvA and exits via RuvB. An RuvB hexamer assembles on each DNA strand where it exits the tetramer. Each RuvB hexamer is contacted by two RuvA subunits (via domain III) on 2 adjacent RuvB subunits; this complex drives branch migration. In the full resolvosome a probable DNA-RuvA(4)-RuvB(12)-RuvC(2) complex forms which resolves the HJ.

It is found in the cytoplasm. The enzyme catalyses ATP + H2O = ADP + phosphate + H(+). Its function is as follows. The RuvA-RuvB-RuvC complex processes Holliday junction (HJ) DNA during genetic recombination and DNA repair, while the RuvA-RuvB complex plays an important role in the rescue of blocked DNA replication forks via replication fork reversal (RFR). RuvA specifically binds to HJ cruciform DNA, conferring on it an open structure. The RuvB hexamer acts as an ATP-dependent pump, pulling dsDNA into and through the RuvAB complex. RuvB forms 2 homohexamers on either side of HJ DNA bound by 1 or 2 RuvA tetramers; 4 subunits per hexamer contact DNA at a time. Coordinated motions by a converter formed by DNA-disengaged RuvB subunits stimulates ATP hydrolysis and nucleotide exchange. Immobilization of the converter enables RuvB to convert the ATP-contained energy into a lever motion, pulling 2 nucleotides of DNA out of the RuvA tetramer per ATP hydrolyzed, thus driving DNA branch migration. The RuvB motors rotate together with the DNA substrate, which together with the progressing nucleotide cycle form the mechanistic basis for DNA recombination by continuous HJ branch migration. Branch migration allows RuvC to scan DNA until it finds its consensus sequence, where it cleaves and resolves cruciform DNA. The sequence is that of Holliday junction branch migration complex subunit RuvB from Lactococcus lactis subsp. lactis (strain IL1403) (Streptococcus lactis).